The primary structure comprises 229 residues: Large ribosomal subunit protein uL1 (229 aa).

The protein belongs to the universal ribosomal protein uL1 family. As to quaternary structure, part of the 50S ribosomal subunit.

Binds directly to 23S rRNA. The L1 stalk is quite mobile in the ribosome, and is involved in E site tRNA release. Its function is as follows. Protein L1 is also a translational repressor protein, it controls the translation of the L11 operon by binding to its mRNA. In Lacticaseibacillus casei (strain BL23) (Lactobacillus casei), this protein is Large ribosomal subunit protein uL1.